A 512-amino-acid chain; its full sequence is Cytokinin hydroxylase (512 aa).

A helical membrane pass occupies residues 2–22 (MVTLVLKYVLVIVMTLILRVL). Cys-458 is a binding site for heme.

The protein belongs to the cytochrome P450 family. Heme is required as a cofactor. In terms of tissue distribution, specifically expressed in roots.

The protein localises to the membrane. It carries out the reaction N(6)-(dimethylallyl)adenosine 5'-phosphate + NADPH + O2 + H(+) = 9-ribosyl-trans-zeatin 5'-phosphate + NADP(+) + H2O. It catalyses the reaction N(6)-(dimethylallyl)adenosine 5'-diphosphate + NADPH + O2 + H(+) = 9-ribosyl-trans-zeatin 5'-diphosphate + NADP(+) + H2O. The catalysed reaction is N(6)-(dimethylallyl)adenosine 5'-triphosphate + NADPH + O2 + H(+) = 9-ribosyl-trans-zeatin 5'-triphosphate + NADP(+) + H2O. Its function is as follows. Cytokinin hydroxylase that catalyzes the biosynthesis of trans-zeatin via the isopentenyladenine riboside 5'-monophosphate (iPRMP)-dependent pathway. Can use isopentenyladenosine-5'-monophosphate, isopentenyladenosine-5'-diphosphate and isopentenyladenosine-5'-triphosphate as substrate. The polypeptide is Cytokinin hydroxylase (CYP735A2) (Arabidopsis thaliana (Mouse-ear cress)).